The following is a 359-amino-acid chain: Tryptophan 2,3-dioxygenase (359 aa).

Residues 38-42 (FIIVH) and Arg-109 each bind substrate. His-295 lines the heme pocket. Thr-309 is a substrate binding site.

Belongs to the tryptophan 2,3-dioxygenase family. In terms of assembly, homotetramer. Heme is required as a cofactor.

The enzyme catalyses L-tryptophan + O2 = N-formyl-L-kynurenine. It participates in amino-acid degradation; L-tryptophan degradation via kynurenine pathway; L-kynurenine from L-tryptophan: step 1/2. In terms of biological role, heme-dependent dioxygenase that catalyzes the oxidative cleavage of the L-tryptophan (L-Trp) pyrrole ring and converts L-tryptophan to N-formyl-L-kynurenine. Catalyzes the oxidative cleavage of the indole moiety. This Bdellovibrio bacteriovorus (strain ATCC 15356 / DSM 50701 / NCIMB 9529 / HD100) protein is Tryptophan 2,3-dioxygenase.